Consider the following 180-residue polypeptide: NADH-quinone oxidoreductase subunit I (180 aa).

4Fe-4S ferredoxin-type domains follow at residues leucine 50–alanine 80 and glutamate 90–aspartate 119. [4Fe-4S] cluster is bound by residues cysteine 60, cysteine 63, cysteine 66, cysteine 70, cysteine 99, cysteine 102, cysteine 105, and cysteine 109.

Belongs to the complex I 23 kDa subunit family. NDH-1 is composed of 13 different subunits. Subunits NuoA, H, J, K, L, M, N constitute the membrane sector of the complex. [4Fe-4S] cluster is required as a cofactor.

It localises to the cell inner membrane. The enzyme catalyses a quinone + NADH + 5 H(+)(in) = a quinol + NAD(+) + 4 H(+)(out). Its function is as follows. NDH-1 shuttles electrons from NADH, via FMN and iron-sulfur (Fe-S) centers, to quinones in the respiratory chain. The immediate electron acceptor for the enzyme in this species is believed to be ubiquinone. Couples the redox reaction to proton translocation (for every two electrons transferred, four hydrogen ions are translocated across the cytoplasmic membrane), and thus conserves the redox energy in a proton gradient. This is NADH-quinone oxidoreductase subunit I from Shigella boydii serotype 4 (strain Sb227).